A 36-amino-acid chain; its full sequence is Potassium channel toxin alpha-KTx 16.1 (36 aa).

Intrachain disulfides connect C7–C28, C13–C33, and C17–C35.

Belongs to the short scorpion toxin superfamily. Potassium channel inhibitor family. Alpha-KTx 16 subfamily. As to expression, expressed by the venom gland.

It is found in the secreted. Its function is as follows. Blocks calcium-activated potassium channels. The polypeptide is Potassium channel toxin alpha-KTx 16.1 (Hottentotta tamulus (Eastern Indian scorpion)).